We begin with the raw amino-acid sequence, 155 residues long: Ribosome maturation factor RimP (155 aa).

This sequence belongs to the RimP family.

The protein localises to the cytoplasm. In terms of biological role, required for maturation of 30S ribosomal subunits. The sequence is that of Ribosome maturation factor RimP from Exiguobacterium sibiricum (strain DSM 17290 / CCUG 55495 / CIP 109462 / JCM 13490 / 255-15).